Consider the following 482-residue polypeptide: Probable glycine dehydrogenase (decarboxylating) subunit 2 (482 aa).

The residue at position 269 (Lys269) is an N6-(pyridoxal phosphate)lysine.

It belongs to the GcvP family. C-terminal subunit subfamily. The glycine cleavage system is composed of four proteins: P, T, L and H. In this organism, the P 'protein' is a heterodimer of two subunits. Pyridoxal 5'-phosphate serves as cofactor.

The catalysed reaction is N(6)-[(R)-lipoyl]-L-lysyl-[glycine-cleavage complex H protein] + glycine + H(+) = N(6)-[(R)-S(8)-aminomethyldihydrolipoyl]-L-lysyl-[glycine-cleavage complex H protein] + CO2. Its function is as follows. The glycine cleavage system catalyzes the degradation of glycine. The P protein binds the alpha-amino group of glycine through its pyridoxal phosphate cofactor; CO(2) is released and the remaining methylamine moiety is then transferred to the lipoamide cofactor of the H protein. The chain is Probable glycine dehydrogenase (decarboxylating) subunit 2 from Pelodictyon phaeoclathratiforme (strain DSM 5477 / BU-1).